Here is a 195-residue protein sequence, read N- to C-terminus: MTTLSDSALDQLFLSARTHNAWQDKPVDDALLHRLIDLTKFGPTSANASPARFVFVKSPEAKARLKPALSEGNLAKTMAAPVTVIVGMDMAFHEHLPRLFPHADARSWFAGNDALIETTAFRNSSLQGAYLILAARALGLDAGPMSGFDGAKVDAAFFAGTAIRSNFLVNLGYGDPAGLFPRSPRFDFDDIARIE.

It belongs to the nitroreductase family. HadB/RutE subfamily. FMN serves as cofactor.

In Burkholderia lata (strain ATCC 17760 / DSM 23089 / LMG 22485 / NCIMB 9086 / R18194 / 383), this protein is Putative NADH dehydrogenase/NAD(P)H nitroreductase Bcep18194_B1060.